The primary structure comprises 234 residues: Ribose-5-phosphate isomerase A (234 aa).

Residues 28-31 (TGST), 85-88 (DGAD), and 98-101 (KGLG) contribute to the substrate site. Residue Glu-107 is the Proton acceptor of the active site. Residue Lys-125 participates in substrate binding.

This sequence belongs to the ribose 5-phosphate isomerase family. Homodimer.

It carries out the reaction aldehydo-D-ribose 5-phosphate = D-ribulose 5-phosphate. The protein operates within carbohydrate degradation; pentose phosphate pathway; D-ribose 5-phosphate from D-ribulose 5-phosphate (non-oxidative stage): step 1/1. Catalyzes the reversible conversion of ribose-5-phosphate to ribulose 5-phosphate. In Roseiflexus castenholzii (strain DSM 13941 / HLO8), this protein is Ribose-5-phosphate isomerase A.